We begin with the raw amino-acid sequence, 849 residues long: DNA mismatch repair protein MutS (849 aa).

Residue 602 to 609 coordinates ATP; it reads GPNMSGKS.

It belongs to the DNA mismatch repair MutS family.

Functionally, this protein is involved in the repair of mismatches in DNA. It is possible that it carries out the mismatch recognition step. This protein has a weak ATPase activity. This chain is DNA mismatch repair protein MutS, found in Streptococcus mutans serotype c (strain ATCC 700610 / UA159).